A 73-amino-acid polypeptide reads, in one-letter code: Probable movement protein p8 (73 aa).

Residues 1-12 (MSTVETPAQDTL) are compositionally biased toward polar residues. Residues 1–48 (MSTVETPAQDTLATKEPNKTGAKDRQQARSARLSVAAGAGRTALSQRD) are disordered. Basic and acidic residues predominate over residues 16–27 (EPNKTGAKDRQQ).

Belongs to the carmovirus/necrovirus/panicovirus movement protein p8 family.

It localises to the host cell wall. Its function is as follows. Cell-to-cell movement. The protein is Probable movement protein p8 of Muhlenbergia (Blackwell switchgrass).